The chain runs to 147 residues: Small ribosomal subunit protein bS16 (147 aa).

The disordered stretch occupies residues 89-147 (AWTHGNNPKKAEPGKKAQERAKERADKAEAKAAAAAEAAAAPAEEAPAEAAPAEETSES). Residues 97-118 (KKAEPGKKAQERAKERADKAEA) show a composition bias toward basic and acidic residues. A compositionally biased stretch (low complexity) spans 119–147 (KAAAAAEAAAAPAEEAPAEAAPAEETSES).

This sequence belongs to the bacterial ribosomal protein bS16 family.

The protein is Small ribosomal subunit protein bS16 of Hyphomonas neptunium (strain ATCC 15444).